Reading from the N-terminus, the 233-residue chain is Membrane glycoprotein UL9 (233 aa).

A signal peptide spans Met-1–Ser-20. 5 N-linked (GlcNAc...) asparagine; by host glycosylation sites follow: Asn-40, Asn-94, Asn-101, Asn-131, and Asn-169. A helical transmembrane segment spans residues Met-194 to Pro-214.

The protein belongs to the HHV-5 UL9 family.

Its subcellular location is the host membrane. The protein is Membrane glycoprotein UL9 (UL9) of Homo sapiens (Human).